The primary structure comprises 150 residues: Deoxyuridine 5'-triphosphate nucleotidohydrolase (150 aa).

Substrate contacts are provided by residues 69–71, asparagine 82, and 86–88; these read RSG and TID.

Belongs to the dUTPase family. Requires Mg(2+) as cofactor.

It catalyses the reaction dUTP + H2O = dUMP + diphosphate + H(+). The protein operates within pyrimidine metabolism; dUMP biosynthesis; dUMP from dCTP (dUTP route): step 2/2. This enzyme is involved in nucleotide metabolism: it produces dUMP, the immediate precursor of thymidine nucleotides and it decreases the intracellular concentration of dUTP so that uracil cannot be incorporated into DNA. The polypeptide is Deoxyuridine 5'-triphosphate nucleotidohydrolase (Syntrophus aciditrophicus (strain SB)).